Here is a 132-residue protein sequence, read N- to C-terminus: uncharacterized protein (132 aa).

This is an uncharacterized protein from Methanocaldococcus jannaschii (strain ATCC 43067 / DSM 2661 / JAL-1 / JCM 10045 / NBRC 100440) (Methanococcus jannaschii).